The sequence spans 952 residues: Meiotic coiled-coil protein 3 (952 aa).

3 coiled-coil regions span residues 283–611 (QLLQ…KEHL), 684–716 (TKKF…EDKL), and 839–942 (SLEN…RERE).

It is found in the cytoplasm. Functionally, has a role in meiosis. The sequence is that of Meiotic coiled-coil protein 3 (mcp3) from Schizosaccharomyces pombe (strain 972 / ATCC 24843) (Fission yeast).